The following is a 348-amino-acid chain: Spore development regulator vosA (348 aa).

The region spanning 46–244 (ALSPSSCFLS…SDQGVRLRLR (199 aa)) is the Velvet domain. The tract at residues 250 to 294 (MMSNKRSISGSGDLTSDQSQQQQQQQPLAKKRREDSVESANPSSL) is disordered. Over residues 253–266 (NKRSISGSGDLTSD) the composition is skewed to polar residues. Residues 274 to 280 (QQPLAKK) carry the Nuclear localization signal motif.

It belongs to the velvet family. VosA subfamily. Forms a heterodimeric complex with VEL2; the formation of the VEL2-VOS1 complex is light-dependent.

The protein resides in the nucleus. Component of the velB-VosA heterodimeric complex that plays a dual role in activating genes associated with spore maturation and repressing certain development-associated genes. The complex binds DNA through the DNA-binding domain of vosA that recognizes an 11-nucleotide consensus sequence 5'-CTGGCCGCGGC-3' consisting of two motifs in the promoters of key developmental regulatory genes. Regulates spore viability, trehalose accumulation, and tolerance to thermal and oxidative as well as ion stresses. Positively regulates conidial pigmentation and pathogenicity on barley. The protein is Spore development regulator vosA of Cochliobolus sativus (strain ND90Pr / ATCC 201652) (Common root rot and spot blotch fungus).